A 121-amino-acid chain; its full sequence is MKKFALATIFALATTSAFAGFNGNNSQGGFQQAAPAAISVKQALSAADNSMITLVGNITQQIDDDEFWFTDGTGQIKIEIKKRVWNGLNVDSKDKVKIYGKLDNEVFEKAELDVLRIEKAE.

An N-terminal signal peptide occupies residues 1–19 (MKKFALATIFALATTSAFA).

It to E.coli YgiW.

The protein localises to the periplasm. This is an uncharacterized protein from Haemophilus influenzae (strain ATCC 51907 / DSM 11121 / KW20 / Rd).